The chain runs to 157 residues: ATP synthase subunit b', chloroplastic (157 aa).

Residues 26 to 43 traverse the membrane as a helical segment; it reads LMASQFLLIMLILDITFY.

It belongs to the ATPase B chain family. F-type ATPases have 2 components, F(1) - the catalytic core - and F(0) - the membrane proton channel. F(1) has five subunits: alpha(3), beta(3), gamma(1), delta(1), epsilon(1). F(0) has four main subunits: a(1), b(1), b'(1) and c(10-14). The alpha and beta chains form an alternating ring which encloses part of the gamma chain. F(1) is attached to F(0) by a central stalk formed by the gamma and epsilon chains, while a peripheral stalk is formed by the delta, b and b' chains.

Its subcellular location is the plastid. It localises to the chloroplast thylakoid membrane. Its function is as follows. F(1)F(0) ATP synthase produces ATP from ADP in the presence of a proton or sodium gradient. F-type ATPases consist of two structural domains, F(1) containing the extramembraneous catalytic core and F(0) containing the membrane proton channel, linked together by a central stalk and a peripheral stalk. During catalysis, ATP synthesis in the catalytic domain of F(1) is coupled via a rotary mechanism of the central stalk subunits to proton translocation. Component of the F(0) channel, it forms part of the peripheral stalk, linking F(1) to F(0). The b'-subunit is a diverged and duplicated form of b found in plants and photosynthetic bacteria. In Cyanidium caldarium (Red alga), this protein is ATP synthase subunit b', chloroplastic.